Reading from the N-terminus, the 368-residue chain is MIITQVELYKSPVKLKEPFKISLGILTHANNVIVRIHTASGHIGYGECSPFMTIHGESMDTAFIVGQYLAKGLIGTSCLDIVSNSLLMDAIIYGNSCIKSAFNIALYDLAAQHAGLPLYAFLGGKKDKIIQTDYTVSIDEPHKMAADAVQIKKNGFEIIKVKVGGSKELDVERIRMIREAAGDSITLRIDANQGWSVETAIETLTLLEPYNIQHCEEPVSRNLYTALPKIRQACRIPIMADESCCNSFDAERLIQIQACDSFNLKLSKSAGITNALNIIRLAEQAHMPVQVGGFLESRLGFTAAAHVALVSKTICYYDFDTPLMFEADPVRGGIVYQQRGIIEVPETAGLGAGYQKDYLSGLEKICIN.

Substrate contacts are provided by residues T135 and K160–K162. 3 residues coordinate Mg(2+): D190, E216, and D241. Substrate is bound by residues K265 and D318–D320.

This sequence belongs to the mandelate racemase/muconate lactonizing enzyme family. Mg(2+) serves as cofactor.

Catalyzes the epimerization of D-Ala-D-Ala to D-Ala-L-Ala. Has broad substrate specificity and catalyzes the epimerization of a variety of dipeptides containing an N-terminal Ala followed by a hydrophobic or polar residue, such as Val, Ser and Met (in vitro). The chain is D-Ala-D/L-Ala epimerase (tfdD) from Cytophaga hutchinsonii (strain ATCC 33406 / DSM 1761 / CIP 103989 / NBRC 15051 / NCIMB 9469 / D465).